Here is a 122-residue protein sequence, read N- to C-terminus: Serum amyloid A-1 protein (122 aa).

Positions 1-18 are cleaved as a signal peptide; the sequence is MKPFVAIIFCFLILGVDS. The interval 19-45 is important for amyloid formation; the sequence is QRWFQFMKEAGQGTRDMWRAYTDMREA. Residues 100-122 form a disordered region; sequence ANEWGRSGKDPNFFRPPGLPSKY.

This sequence belongs to the SAA family. In terms of assembly, homohexamer; dimer of trimers. Can form amyloid fibrils after partial proteolysis; the native, undenatured protein does not form amyloid fibrils (in vitro). Apolipoprotein of the HDL complex. Binds to heparin. As to expression, detected in liver, spleen and kidney.

The protein localises to the secreted. Major acute phase protein. The chain is Serum amyloid A-1 protein (SAA1) from Mesocricetus auratus (Golden hamster).